The chain runs to 190 residues: Dense granule protein 1 (190 aa).

A signal peptide spans 1 to 24 (MVRVSAIVGAAASVFVCLSAGAYA). N30 carries N-linked (GlcNAc...) asparagine glycosylation.

It is found in the secreted. The chain is Dense granule protein 1 (GRA1) from Toxoplasma gondii.